Reading from the N-terminus, the 420-residue chain is Zinc finger protein 362 (420 aa).

Disordered regions lie at residues 1–28 (MSRSSPSGKGHSRMAEPRFNNPYFWPPP), 54–80 (RPPHLPPTSASSQQPLLVPPAPAESSQ), and 115–155 (VTGL…SQSR). The span at 121-154 (STRTPSVSTSESSAGAGTGTGTSTPSTPTTTSQS) shows a compositional bias: low complexity. T162 carries the post-translational modification Phosphothreonine. Residues 178–202 (TIQGHGLLGPPKSERGRKKIKAENP) are disordered. K198 is covalently cross-linked (Glycyl lysine isopeptide (Lys-Gly) (interchain with G-Cter in SUMO2)). 6 C2H2-type zinc fingers span residues 227–249 (YRCKVCPLTFFTKSEMQIHSKSH), 255–277 (HKCPHCSKSFANASYLAQHLRIH), 283–305 (YHCSYCDKSFRQLSHLQQHTRIH), 311–335 (YKCPHPGCEKAFTQLSNLQSHQRQH), 341–363 (YKCPNCYRAYSDSASLQIHLSAH), and 371–393 (YCCSMCGRAYTSETYLMKHMSKH). S404 is subject to Phosphoserine.

Belongs to the krueppel C2H2-type zinc-finger protein family.

It localises to the nucleus. Functionally, may be involved in transcriptional regulation. In Homo sapiens (Human), this protein is Zinc finger protein 362 (ZNF362).